Consider the following 408-residue polypeptide: Elongation factor Tu, chloroplastic (408 aa).

The tr-type G domain occupies 10-214 (KPHVNIGTIG…AVDSYIPTPK (205 aa)). The tract at residues 19–26 (GHVDHGKT) is G1. Residue 19–26 (GHVDHGKT) participates in GTP binding. Threonine 26 provides a ligand contact to Mg(2+). The tract at residues 60–64 (GITIN) is G2. The interval 81 to 84 (DCPG) is G3. GTP is bound by residues 81-85 (DCPGH) and 136-139 (NKED). Positions 136 to 139 (NKED) are G4. Residues 174-176 (SAL) form a G5 region.

It belongs to the TRAFAC class translation factor GTPase superfamily. Classic translation factor GTPase family. EF-Tu/EF-1A subfamily.

It is found in the plastid. Its subcellular location is the chloroplast. The catalysed reaction is GTP + H2O = GDP + phosphate + H(+). GTP hydrolase that promotes the GTP-dependent binding of aminoacyl-tRNA to the A-site of ribosomes during protein biosynthesis. The polypeptide is Elongation factor Tu, chloroplastic (tufA) (Chara connivens (Convergent stonewort)).